Here is a 231-residue protein sequence, read N- to C-terminus: Phosphatidylserine decarboxylase proenzyme (231 aa).

Serine 188 acts as the Schiff-base intermediate with substrate; via pyruvic acid in catalysis. At serine 188 the chain carries Pyruvic acid (Ser); by autocatalysis.

The protein belongs to the phosphatidylserine decarboxylase family. PSD-A subfamily. Heterodimer of a large membrane-associated beta subunit and a small pyruvoyl-containing alpha subunit. Pyruvate is required as a cofactor. Post-translationally, is synthesized initially as an inactive proenzyme. Formation of the active enzyme involves a self-maturation process in which the active site pyruvoyl group is generated from an internal serine residue via an autocatalytic post-translational modification. Two non-identical subunits are generated from the proenzyme in this reaction, and the pyruvate is formed at the N-terminus of the alpha chain, which is derived from the carboxyl end of the proenzyme. The post-translation cleavage follows an unusual pathway, termed non-hydrolytic serinolysis, in which the side chain hydroxyl group of the serine supplies its oxygen atom to form the C-terminus of the beta chain, while the remainder of the serine residue undergoes an oxidative deamination to produce ammonia and the pyruvoyl prosthetic group on the alpha chain.

Its subcellular location is the cell membrane. It catalyses the reaction a 1,2-diacyl-sn-glycero-3-phospho-L-serine + H(+) = a 1,2-diacyl-sn-glycero-3-phosphoethanolamine + CO2. It participates in phospholipid metabolism; phosphatidylethanolamine biosynthesis; phosphatidylethanolamine from CDP-diacylglycerol: step 2/2. Catalyzes the formation of phosphatidylethanolamine (PtdEtn) from phosphatidylserine (PtdSer). In Rickettsia prowazekii (strain Madrid E), this protein is Phosphatidylserine decarboxylase proenzyme.